Here is a 367-residue protein sequence, read N- to C-terminus: uncharacterized protein (367 aa).

A disordered region spans residues 333 to 367 (RERRPTLNAQRAHAAAQQQPRRRNRRQQGTGASAS). Positions 341 to 351 (AQRAHAAAQQQ) are enriched in low complexity.

This is an uncharacterized protein from Amazona oratrix (yellow-headed parrot).